Reading from the N-terminus, the 55-residue chain is Riparin-1.5 acid (55 aa).

A signal peptide spans 1–15 (MKIIVFLAVLMLVSA). The propeptide occupies 16–41 (QVCLVSAAEMEHSSDNELSSRDLVKR). A disulfide bridge links Cys-47 with Cys-53. Residues 54–55 (NH) constitute a propeptide that is removed on maturation.

As to expression, expressed by the skin glands.

Its subcellular location is the secreted. This Crinia riparia (Streambank froglet) protein is Riparin-1.5 acid.